A 31-amino-acid polypeptide reads, in one-letter code: Conotoxin pc6b (31 aa).

3 disulfide bridges follow: Cys-2-Cys-20, Cys-9-Cys-25, and Cys-19-Cys-29.

This sequence belongs to the conotoxin O1 superfamily. Expressed by the venom duct.

It is found in the secreted. The protein is Conotoxin pc6b of Conus pictus (Cone snail).